Here is a 231-residue protein sequence, read N- to C-terminus: Putative N-acetylmannosamine-6-phosphate 2-epimerase (231 aa).

Belongs to the NanE family.

The catalysed reaction is an N-acyl-D-glucosamine 6-phosphate = an N-acyl-D-mannosamine 6-phosphate. It participates in amino-sugar metabolism; N-acetylneuraminate degradation; D-fructose 6-phosphate from N-acetylneuraminate: step 3/5. In terms of biological role, converts N-acetylmannosamine-6-phosphate (ManNAc-6-P) to N-acetylglucosamine-6-phosphate (GlcNAc-6-P). This Listeria monocytogenes serotype 4b (strain CLIP80459) protein is Putative N-acetylmannosamine-6-phosphate 2-epimerase.